The following is a 543-amino-acid chain: Chaperonin GroEL 2 (543 aa).

ATP is bound by residues 29 to 32 (TLGP), 86 to 90 (DGTTT), Gly-413, 477 to 479 (DAA), and Asp-493. The tract at residues 523 to 543 (PQEPEPAAGGHGHGHQHGPGF) is disordered. Residues 534-543 (GHGHQHGPGF) show a composition bias toward basic residues.

The protein belongs to the chaperonin (HSP60) family. As to quaternary structure, forms a cylinder of 14 subunits composed of two heptameric rings stacked back-to-back. Interacts with the co-chaperonin GroES.

It is found in the cytoplasm. The enzyme catalyses ATP + H2O + a folded polypeptide = ADP + phosphate + an unfolded polypeptide.. Together with its co-chaperonin GroES, plays an essential role in assisting protein folding. The GroEL-GroES system forms a nano-cage that allows encapsulation of the non-native substrate proteins and provides a physical environment optimized to promote and accelerate protein folding. The chain is Chaperonin GroEL 2 from Salinispora tropica (strain ATCC BAA-916 / DSM 44818 / JCM 13857 / NBRC 105044 / CNB-440).